The primary structure comprises 68 residues: Small ribosomal subunit protein bS21 (68 aa).

Belongs to the bacterial ribosomal protein bS21 family.

The polypeptide is Small ribosomal subunit protein bS21 (Endomicrobium trichonymphae).